The chain runs to 276 residues: Diaminopimelate epimerase (276 aa).

Substrate is bound by residues asparagine 13, glutamine 46, and asparagine 66. Cysteine 75 functions as the Proton donor in the catalytic mechanism. Substrate-binding positions include 76–77, asparagine 159, asparagine 192, and 210–211; these read GN and ER. The Proton acceptor role is filled by cysteine 219. 220-221 serves as a coordination point for substrate; the sequence is GT.

The protein belongs to the diaminopimelate epimerase family. In terms of assembly, homodimer.

The protein resides in the cytoplasm. It catalyses the reaction (2S,6S)-2,6-diaminopimelate = meso-2,6-diaminopimelate. The protein operates within amino-acid biosynthesis; L-lysine biosynthesis via DAP pathway; DL-2,6-diaminopimelate from LL-2,6-diaminopimelate: step 1/1. Its function is as follows. Catalyzes the stereoinversion of LL-2,6-diaminopimelate (L,L-DAP) to meso-diaminopimelate (meso-DAP), a precursor of L-lysine and an essential component of the bacterial peptidoglycan. The polypeptide is Diaminopimelate epimerase (Azotobacter vinelandii (strain DJ / ATCC BAA-1303)).